Consider the following 163-residue polypeptide: Single-stranded DNA-binding protein 2 (163 aa).

Residues Met-1–Glu-104 enclose the SSB domain. Residues Arg-109 to Phe-163 form a disordered region. Residues Gly-119–Ser-130 are compositionally biased toward low complexity. A compositionally biased stretch (polar residues) spans Tyr-131–Asn-140. The short motif at Asp-158–Phe-163 is the Important for interaction with partner proteins element.

Homotetramer.

In terms of biological role, plays an important role in DNA replication, recombination and repair. Binds to ssDNA and to an array of partner proteins to recruit them to their sites of action during DNA metabolism. The protein is Single-stranded DNA-binding protein 2 (ssb2) of Streptococcus pyogenes serotype M6 (strain ATCC BAA-946 / MGAS10394).